The following is a 195-amino-acid chain: BH3-interacting domain death agonist (195 aa).

Methionine 1 carries the post-translational modification N-acetylmethionine. The span at 58–69 shows a compositional bias: polar residues; sequence TDGSQASRSFNQ. The tract at residues 58 to 77 is disordered; the sequence is TDGSQASRSFNQGRIEPDSE. Serine 78 bears the Phosphoserine mark. The BH3 motif lies at 87-100; the sequence is ARHLAQIGDEMDHN.

In terms of assembly, forms heterodimers either with the pro-apoptotic protein BAX or the anti-apoptotic protein BCL2. Interacts with PLEKHN1. Interacts with ITCH. Interacts with MTCH2. In terms of processing, TNF-alpha induces caspase-mediated cleavage into a major p15 and minor p13 and p11 products. Cleaved by CASP6 into a major p15 and minor p13 products, leading to release of cytochrome c and subsequent nonalcoholic steatohepatitis. Post-translationally, ubiquitinated by ITCH; ubiquitination results in proteasome-dependent degradation.

Its subcellular location is the cytoplasm. The protein resides in the mitochondrion membrane. It is found in the mitochondrion outer membrane. Functionally, induces caspases and apoptosis. Counters the protective effect of BCL2. Induces caspase activation and apoptosis. Allows the release of cytochrome c. The chain is BH3-interacting domain death agonist (Bid) from Mus musculus (Mouse).